The following is a 118-amino-acid chain: Large ribosomal subunit protein bL20 (118 aa).

It belongs to the bacterial ribosomal protein bL20 family.

Functionally, binds directly to 23S ribosomal RNA and is necessary for the in vitro assembly process of the 50S ribosomal subunit. It is not involved in the protein synthesizing functions of that subunit. In Azotobacter vinelandii, this protein is Large ribosomal subunit protein bL20.